The sequence spans 532 residues: Fatty-acid amide hydrolase 2 (532 aa).

Residues 11-31 form a helical membrane-spanning segment; it reads LFLLRALGFLIGLVGRAALVL. Residues K131 and S206 each act as charge relay system in the active site. S230 functions as the Acyl-ester intermediate in the catalytic mechanism.

It belongs to the amidase family. In terms of assembly, homodimer. As to expression, expressed in kidney, liver, lung, prostate, heart and ovary.

It localises to the membrane. The protein localises to the lipid droplet. It catalyses the reaction N-(5Z,8Z,11Z,14Z-eicosatetraenoyl)-ethanolamine + H2O = ethanolamine + (5Z,8Z,11Z,14Z)-eicosatetraenoate. It carries out the reaction (9Z)-octadecenamide + H2O = (9Z)-octadecenoate + NH4(+). The catalysed reaction is N-(9Z-octadecenoyl) ethanolamine + H2O = ethanolamine + (9Z)-octadecenoate. The enzyme catalyses N-hexadecanoylethanolamine + H2O = ethanolamine + hexadecanoate. Inhibited by O-aryl carbamates and alpha-keto heterocytes. Catalyzes the hydrolysis of endogenous amidated lipids like the sleep-inducing lipid oleamide ((9Z)-octadecenamide), the endocannabinoid anandamide (N-(5Z,8Z,11Z,14Z-eicosatetraenoyl)-ethanolamine), as well as other fatty amides, to their corresponding fatty acids, thereby regulating the signaling functions of these molecules. Hydrolyzes monounsaturated substrate anandamide preferentially as compared to polyunsaturated substrates. In Homo sapiens (Human), this protein is Fatty-acid amide hydrolase 2 (FAAH2).